The chain runs to 2303 residues: Genome polyprotein (2303 aa).

Residues 3-14 fold into a zinc finger; the sequence is CKHGYPDVCPIC. The tract at residues 30 to 46 is acidic; that stretch reads DGEWYPTDLLCVDLDDD. A theilo region spans residues 60–73; the sequence is MDWTDVPLIRDIVM. Residues 74-93 are disordered; the sequence is EPQGNSSSSDKSNSQSSGNE. Glycine 77 carries the N-myristoyl glycine; by host lipid modification. The span at 78–92 shows a compositional bias: low complexity; sequence NSSSSDKSNSQSSGN. Cysteines 501 and 503 form a disulfide. The segment at 1041–1047 is host EIF4E binding; the sequence is YYRQRLI. The 166-residue stretch at 1283–1448 folds into the SF3 helicase domain; the sequence is IPLASLCEKF…CKTPAGMLDV (166 aa). 1312 to 1319 is an ATP binding site; sequence GAAGQGKS. Tyrosine 1608 is subject to O-(5'-phospho-RNA)-tyrosine. Positions 1636-1829 constitute a Peptidase C3 domain; the sequence is NPVMDFELFC…AATIITKELI (194 aa). Active-site for protease 3C activity residues include histidine 1680, aspartate 1714, and cysteine 1793. Residues 2071–2189 enclose the RdRp catalytic domain; it reads NYVYDVDYSN…GTNYQIDFNL (119 aa). Catalysis depends on for RdRp activity residues aspartate 2077 and aspartate 2175.

This sequence belongs to the picornaviruses polyprotein family. As to quaternary structure, interacts with host EIF4E. Interacts with the leader protein. In terms of assembly, interacts with host RAN; the complex L-RAN recruits cellular kinases responsible for the L-induced nucleocytoplasmic trafficking inhibition. The complex L-RAN can further bind to the host exportins XPO1/CRM1 and CSE1L/CAS. Interacts with the protein 2A. Interacts with host RNASEL; this interaction prevents RNASEL activation by its substrate 2'-5' oligoadenylates. Post-translationally, phosphorylated. Specific enzymatic cleavages by the viral protease in vivo yield a variety of precursors and mature proteins. The polyprotein seems to be cotranslationally cleaved at the 2A/2B junction by a ribosomal skip from one codon to the next without formation of a peptide bond. This process would release the P1-2A peptide from the translational complex. In terms of processing, during virion maturation, immature virions are rendered infectious following cleavage of VP0 into VP4 and VP2. This maturation seems to be an autocatalytic event triggered by the presence of RNA in the capsid and is followed by a conformational change of the particle. Post-translationally, uridylylated by the polymerase and is covalently linked to the 5'-end of genomic RNA. This uridylylated form acts as a nucleotide-peptide primer for the polymerase. Myristoylation is required during RNA encapsidation and formation of the mature virus particle.

Its subcellular location is the virion. The protein localises to the host cytoplasm. It localises to the host nucleus. It is found in the host nucleolus. The protein resides in the host cytoplasmic vesicle membrane. The catalysed reaction is RNA(n) + a ribonucleoside 5'-triphosphate = RNA(n+1) + diphosphate. It carries out the reaction ATP + H2O = ADP + phosphate + H(+). It catalyses the reaction Selective cleavage of Gln-|-Gly bond in the poliovirus polyprotein. In other picornavirus reactions Glu may be substituted for Gln, and Ser or Thr for Gly.. Its function is as follows. Forms a complex with host RAN and probably binds to exportins carrying activated MAPK in order to mediate the hyperphosphorylation of host Phe/Gly containing nuclear pore proteins (Nups) resulting in cessation of active nucleocytoplasmic transport. Proteins with NLS signals fail to import, cellular mRNAs fail to export, and some proteins small enough for diffusion are not retained anymore (efflux). The resulting inhibition of cellular protein synthesis serves to ensure maximal viral gene expression and to evade host immune response. The leader protein also inhibits host interferon regulatory factor 3 (IRF3) dimerization, thereby blocking the transcriptional activation of IFN genes. Binds to host RNase L thereby preventing its activation by 2'-5' oligoadenylates in order to counteract the antiviral interferon-inducible OAS/RNase L pathway. Inhibits the integrated stress response (ISR) in the infected cell. Inhibits the host EIF2AK2/PKR by rendering this kinase unable to detect double-stranded RNA. Also impairs host stress granule formation probably by acting on a step downstream of EIF2AK2/PKR activation. Functionally, forms an icosahedral capsid of pseudo T=3 symmetry with capsid proteins VP2 and VP3. Together they form an icosahedral capsid composed of 60 copies of each VP1, VP2, and VP3, with a diameter of approximately 300 Angstroms. VP4 lies on the inner surface of the protein shell formed by VP1, VP2 and VP3. All the three latter proteins contain a beta-sheet structure called beta-barrel jelly roll. VP1 is situated at the 12 fivefold axes, whereas VP2 and VP3 are located at the quasi-sixfold axes. Lies on the inner surface of the capsid shell. After binding to the host receptor, the capsid undergoes conformational changes. Capsid protein VP4 is released, capsid protein VP1 N-terminus is externalized, and together, they shape a pore in the host membrane through which the viral genome is translocated into the host cell cytoplasm. After genome has been released, the channel shrinks. In terms of biological role, VP0 precursor is a component of immature procapsids. Its function is as follows. Involved in host translation shutoff by inhibiting cap-dependent mRNA translation. Nuclear localization is required for this function. The resulting inhibition of cellular protein synthesis serves to ensure maximal viral gene expression and to evade host immune response. Inhibits the phosphorylation of the leader protein. Functionally, affects membrane integrity and causes an increase in membrane permeability. Associates with and induces structural rearrangements of intracellular membranes. It displays RNA-binding, nucleotide binding and NTPase activities. In terms of biological role, serves as membrane anchor via its hydrophobic domain. Its function is as follows. Forms a primer, VPg-pU, which is utilized by the polymerase for the initiation of RNA chains. Functionally, cysteine protease that generates mature viral proteins from the precursor polyprotein. In addition to its proteolytic activity, it binds to viral RNA, and thus influences viral genome replication. RNA and substrate cooperatively bind to the protease. Cleaves host PABP1, this cleavage is important for viral replication. Replicates the genomic and antigenomic RNAs by recognizing replications specific signals. Performs VPg uridylylation. The polypeptide is Genome polyprotein (Mus musculus (Mouse)).